We begin with the raw amino-acid sequence, 188 residues long: MADNVFKSQDIGLRAQKKILSRMATKNIAKTFIDGTTASLLDNLYRLCKMHTGNKAKAEKLIKNIIKIVIKIGVLHRNNQFSDEELQRAENFKRKFQNTQLSIISFYEVDYTFDLAYLQKSIAESQVALKSIVQPHLTDKSLGRIDEVFDFFGDAVLLETAFKPDSPYREVMGKIVADINSAMETGDI.

It belongs to the TNFAIP8 family.

This Drosophila pseudoobscura pseudoobscura (Fruit fly) protein is Tumor necrosis factor alpha-induced protein 8-like protein.